The primary structure comprises 231 residues: Endo-1,4-beta-xylanase 4 (231 aa).

An N-terminal signal peptide occupies residues 1 to 18; it reads MVSFTTILVAATAALVAA. The 189-residue stretch at 42-230 folds into the GH11 domain; sequence GGTPSSTGTH…SSGSSTVTIQ (189 aa). An N-linked (GlcNAc...) asparagine glycan is attached at asparagine 99. The active-site Nucleophile is glutamate 126. The Proton donor role is filled by glutamate 217.

It belongs to the glycosyl hydrolase 11 (cellulase G) family.

The protein localises to the secreted. The enzyme catalyses Endohydrolysis of (1-&gt;4)-beta-D-xylosidic linkages in xylans.. The protein operates within glycan degradation; xylan degradation. Its function is as follows. Endo-1,4-beta-xylanase involved in the hydrolysis of xylan, a major structural heterogeneous polysaccharide found in plant biomass representing the second most abundant polysaccharide in the biosphere, after cellulose. The protein is Endo-1,4-beta-xylanase 4 (XYL4) of Pyricularia grisea (Crabgrass-specific blast fungus).